The sequence spans 131 residues: Small ribosomal subunit protein uS8 (131 aa).

It belongs to the universal ribosomal protein uS8 family. In terms of assembly, part of the 30S ribosomal subunit. Contacts proteins S5 and S12.

Functionally, one of the primary rRNA binding proteins, it binds directly to 16S rRNA central domain where it helps coordinate assembly of the platform of the 30S subunit. The sequence is that of Small ribosomal subunit protein uS8 from Campylobacter hominis (strain ATCC BAA-381 / DSM 21671 / CCUG 45161 / LMG 19568 / NCTC 13146 / CH001A).